Reading from the N-terminus, the 241-residue chain is Methylthioribulose-1-phosphate dehydratase (241 aa).

The interval methionine 1–glutamate 20 is disordered. Cysteine 100 is a binding site for substrate. 2 residues coordinate Zn(2+): histidine 117 and histidine 119. The active-site Proton donor/acceptor is the glutamate 146. Zn(2+) is bound at residue histidine 202.

The protein belongs to the aldolase class II family. MtnB subfamily. Zn(2+) serves as cofactor.

The protein localises to the cytoplasm. It catalyses the reaction 5-(methylsulfanyl)-D-ribulose 1-phosphate = 5-methylsulfanyl-2,3-dioxopentyl phosphate + H2O. It functions in the pathway amino-acid biosynthesis; L-methionine biosynthesis via salvage pathway; L-methionine from S-methyl-5-thio-alpha-D-ribose 1-phosphate: step 2/6. Functionally, catalyzes the dehydration of methylthioribulose-1-phosphate (MTRu-1-P) into 2,3-diketo-5-methylthiopentyl-1-phosphate (DK-MTP-1-P). The polypeptide is Methylthioribulose-1-phosphate dehydratase (Blastomyces gilchristii (strain SLH14081) (Blastomyces dermatitidis)).